The chain runs to 213 residues: UPF0329 protein ECU04_0110 (213 aa).

It belongs to the UPF0329 family.

The protein is UPF0329 protein ECU04_0110 of Encephalitozoon cuniculi (strain GB-M1) (Microsporidian parasite).